Consider the following 704-residue polypeptide: Transmembrane protein DDB_G0274347 (704 aa).

The disordered stretch occupies residues 37–145 (VEQRDEVNDE…NNYNNNNTPT (109 aa)). A compositionally biased stretch (acidic residues) spans 43-67 (VNDEFQEEEEELEDDDDDEDDEDEI). Residues 85–99 (HNDKEKEKKKDKQEE) are compositionally biased toward basic and acidic residues. Residues 100-113 (YIDSDDDDDDDGDE) show a composition bias toward acidic residues. A compositionally biased stretch (low complexity) spans 114–142 (NYYLNNNNNNNNNINNNNNYNNNNYNNNN). The N-linked (GlcNAc...) asparagine glycan is linked to asparagine 166. A helical membrane pass occupies residues 255–275 (ALISMALLISLVAIIFYLPLP). N-linked (GlcNAc...) asparagine glycosylation is present at asparagine 354. 3 helical membrane-spanning segments follow: residues 370 to 390 (LKIF…WLFA), 414 to 434 (TLLV…LYFI), and 513 to 533 (LVSF…FLIS). The segment covering 550 to 565 (TTTTTINTTTNTTSNT) has biased composition (low complexity). The disordered stretch occupies residues 550-576 (TTTTTINTTTNTTSNTSQQSNPLSKRL). Residues asparagine 556, asparagine 560, and asparagine 564 are each glycosylated (N-linked (GlcNAc...) asparagine). The segment covering 566–576 (SQQSNPLSKRL) has biased composition (polar residues). 2 consecutive transmembrane segments (helical) span residues 609–629 (FIIV…GVPP) and 638–658 (IFFI…LIII).

It localises to the membrane. The sequence is that of Transmembrane protein DDB_G0274347 from Dictyostelium discoideum (Social amoeba).